A 130-amino-acid polypeptide reads, in one-letter code: Phosphoribosyl-AMP cyclohydrolase (130 aa).

Asp77 serves as a coordination point for Mg(2+). Cys78 provides a ligand contact to Zn(2+). Residues Asp79 and Asp81 each coordinate Mg(2+). Positions 95 and 102 each coordinate Zn(2+).

This sequence belongs to the PRA-CH family. Homodimer. The cofactor is Mg(2+). Zn(2+) serves as cofactor.

The protein resides in the cytoplasm. It carries out the reaction 1-(5-phospho-beta-D-ribosyl)-5'-AMP + H2O = 1-(5-phospho-beta-D-ribosyl)-5-[(5-phospho-beta-D-ribosylamino)methylideneamino]imidazole-4-carboxamide. The protein operates within amino-acid biosynthesis; L-histidine biosynthesis; L-histidine from 5-phospho-alpha-D-ribose 1-diphosphate: step 3/9. Functionally, catalyzes the hydrolysis of the adenine ring of phosphoribosyl-AMP. In Pseudomonas putida (strain ATCC 700007 / DSM 6899 / JCM 31910 / BCRC 17059 / LMG 24140 / F1), this protein is Phosphoribosyl-AMP cyclohydrolase.